Consider the following 117-residue polypeptide: Immunoglobulin heavy variable 4-4 (117 aa).

A signal peptide spans 1-19; the sequence is MKHLWFFLLLVAAPRWVLS. Residues 20–44 are framework-1; it reads QVQLQESGPGLVKPSGTLSLTCAVS. In terms of domain architecture, Ig-like spans 20–117; sequence QVQLQESGPG…ADTAVYYCAR (98 aa). Cysteines 41 and 115 form a disulfide. The interval 45–53 is complementarity-determining-1; it reads GGSISSSNW. The tract at residues 54–70 is framework-2; the sequence is WSWVRQPPGKGLEWIGE. A complementarity-determining-2 region spans residues 71-77; it reads IYHSGST. A framework-3 region spans residues 78-115; the sequence is NYNPSLKSRVTISVDKSKNQFSLKLSSVTAADTAVYYC. Positions 116-117 are complementarity-determining-3; it reads AR.

In terms of assembly, immunoglobulins are composed of two identical heavy chains and two identical light chains; disulfide-linked.

The protein localises to the secreted. The protein resides in the cell membrane. Functionally, v region of the variable domain of immunoglobulin heavy chains that participates in the antigen recognition. Immunoglobulins, also known as antibodies, are membrane-bound or secreted glycoproteins produced by B lymphocytes. In the recognition phase of humoral immunity, the membrane-bound immunoglobulins serve as receptors which, upon binding of a specific antigen, trigger the clonal expansion and differentiation of B lymphocytes into immunoglobulins-secreting plasma cells. Secreted immunoglobulins mediate the effector phase of humoral immunity, which results in the elimination of bound antigens. The antigen binding site is formed by the variable domain of one heavy chain, together with that of its associated light chain. Thus, each immunoglobulin has two antigen binding sites with remarkable affinity for a particular antigen. The variable domains are assembled by a process called V-(D)-J rearrangement and can then be subjected to somatic hypermutations which, after exposure to antigen and selection, allow affinity maturation for a particular antigen. The chain is Immunoglobulin heavy variable 4-4 from Homo sapiens (Human).